The chain runs to 148 residues: Ribonuclease H (148 aa).

The 143-residue stretch at 1–143 (MNQVVIYTDG…ADMLANKGVE (143 aa)) folds into the RNase H type-1 domain. 4 residues coordinate Mg(2+): Asp-9, Glu-47, Asp-69, and Asp-135.

This sequence belongs to the RNase H family. In terms of assembly, monomer. Mg(2+) is required as a cofactor.

The protein localises to the cytoplasm. The catalysed reaction is Endonucleolytic cleavage to 5'-phosphomonoester.. In terms of biological role, endonuclease that specifically degrades the RNA of RNA-DNA hybrids. The sequence is that of Ribonuclease H from Acidovorax sp. (strain JS42).